The following is a 223-amino-acid chain: 7-cyano-7-deazaguanine synthase (223 aa).

ATP is bound at residue M8 to A18. Zn(2+) is bound by residues C187, C195, C198, and C201.

This sequence belongs to the QueC family. It depends on Zn(2+) as a cofactor.

The catalysed reaction is 7-carboxy-7-deazaguanine + NH4(+) + ATP = 7-cyano-7-deazaguanine + ADP + phosphate + H2O + H(+). It functions in the pathway purine metabolism; 7-cyano-7-deazaguanine biosynthesis. Functionally, catalyzes the ATP-dependent conversion of 7-carboxy-7-deazaguanine (CDG) to 7-cyano-7-deazaguanine (preQ(0)). The chain is 7-cyano-7-deazaguanine synthase from Campylobacter curvus (strain 525.92).